The following is a 345-amino-acid chain: Heat-inducible transcription repressor HrcA (345 aa).

This sequence belongs to the HrcA family.

Its function is as follows. Negative regulator of class I heat shock genes (grpE-dnaK-dnaJ and groELS operons). Prevents heat-shock induction of these operons. In Dehalococcoides mccartyi (strain ATCC BAA-2100 / JCM 16839 / KCTC 5957 / BAV1), this protein is Heat-inducible transcription repressor HrcA.